A 454-amino-acid polypeptide reads, in one-letter code: Repulsive guidance molecule A (454 aa).

Residues 1–47 form the signal peptide; sequence MQPPRERLVVTGRAGWMGMGRGAGRSALGLWPTLAFLLCSFPAAISP. Positions 48–169 are cleaved as a propeptide — removed in mature form; sequence CKILKCNSEF…NYTHCGLFGD (122 aa). The span at 114 to 126 shows a compositional bias: polar residues; it reads HNCSKDGPTSQPR. The segment at 114 to 141 is disordered; that stretch reads HNCSKDGPTSQPRVRTLPPAGDSQERSD. N-linked (GlcNAc...) asparagine glycans are attached at residues Asn115 and Asn160. Cystine bridges form between Cys146/Cys227 and Cys164/Cys316. The N-linked (GlcNAc...) asparagine glycan is linked to Asn388. Residue Ala427 is the site of GPI-anchor amidated alanine attachment. The propeptide at 428–454 is removed in mature form; the sequence is AAATTFPLAPQILLGTIPLLVLLPVLW.

The protein belongs to the repulsive guidance molecule (RGM) family. As to quaternary structure, interacts with NEO1, BMP2 and BMP4. Autocatalytically cleaved at low pH; the two chains remain linked via two disulfide bonds. As to expression, expressed in gradient in periventricular layers of the developing nervous system. In adult, expressed in scattered cells throughout the brain.

The protein resides in the cell membrane. In terms of biological role, member of the repulsive guidance molecule (RGM) family that performs several functions in the developing and adult nervous system. Regulates cephalic neural tube closure, inhibits neurite outgrowth and cortical neuron branching, and the formation of mature synapses. Binding to its receptor NEO1/neogenin induces activation of RHOA-ROCK1/Rho-kinase signaling pathway through UNC5B-ARHGEF12/LARG-PTK2/FAK1 cascade, leading to collapse of the neuronal growth cone and neurite outgrowth inhibition. Furthermore, RGMA binding to NEO1/neogenin leads to HRAS inactivation by influencing HRAS-PTK2/FAK1-AKT1 pathway. It also functions as a bone morphogenetic protein (BMP) coreceptor that may signal through SMAD1, SMAD5, and SMAD8. The sequence is that of Repulsive guidance molecule A (Rgma) from Mus musculus (Mouse).